Here is a 327-residue protein sequence, read N- to C-terminus: tRNA N6-adenosine threonylcarbamoyltransferase (327 aa).

2 residues coordinate Fe cation: His107 and His111. Substrate-binding positions include 129–133 (LVSGG), Asp162, Gly175, and Asn263. Asp291 provides a ligand contact to Fe cation.

Belongs to the KAE1 / TsaD family. Fe(2+) is required as a cofactor.

Its subcellular location is the cytoplasm. It carries out the reaction L-threonylcarbamoyladenylate + adenosine(37) in tRNA = N(6)-L-threonylcarbamoyladenosine(37) in tRNA + AMP + H(+). In terms of biological role, required for the formation of a threonylcarbamoyl group on adenosine at position 37 (t(6)A37) in tRNAs that read codons beginning with adenine. Is involved in the transfer of the threonylcarbamoyl moiety of threonylcarbamoyl-AMP (TC-AMP) to the N6 group of A37, together with TsaE and TsaB. TsaD likely plays a direct catalytic role in this reaction. The polypeptide is tRNA N6-adenosine threonylcarbamoyltransferase (Nautilia profundicola (strain ATCC BAA-1463 / DSM 18972 / AmH)).